Consider the following 576-residue polypeptide: DNA mismatch repair protein MutL (576 aa).

This sequence belongs to the DNA mismatch repair MutL/HexB family.

Its function is as follows. This protein is involved in the repair of mismatches in DNA. It is required for dam-dependent methyl-directed DNA mismatch repair. May act as a 'molecular matchmaker', a protein that promotes the formation of a stable complex between two or more DNA-binding proteins in an ATP-dependent manner without itself being part of a final effector complex. This Chlamydia trachomatis serovar A (strain ATCC VR-571B / DSM 19440 / HAR-13) protein is DNA mismatch repair protein MutL.